The primary structure comprises 369 residues: Homoserine O-succinyltransferase (369 aa).

The tract at residues 90-93 (GISA) is important for substrate specificity. In terms of domain architecture, AB hydrolase-1 spans 107 to 353 (WWSGAVGVRA…YGHDAFLKED (247 aa)). Ser-175 serves as the catalytic Nucleophile. Position 236 (Arg-236) interacts with substrate. Catalysis depends on residues Asp-316 and His-346. Asp-347 contacts substrate.

This sequence belongs to the AB hydrolase superfamily. MetX family. As to quaternary structure, homodimer.

It is found in the cytoplasm. The catalysed reaction is L-homoserine + succinyl-CoA = O-succinyl-L-homoserine + CoA. It participates in amino-acid biosynthesis; L-methionine biosynthesis via de novo pathway; O-succinyl-L-homoserine from L-homoserine: step 1/1. In terms of biological role, transfers a succinyl group from succinyl-CoA to L-homoserine, forming succinyl-L-homoserine. The sequence is that of Homoserine O-succinyltransferase from Brevundimonas diminuta (strain ATCC 11568 / DSM 7234 / NBRC 12697 / NCIMB 9393 / NCTC 8545).